The sequence spans 445 residues: Alpha/beta hydrolase psoB (445 aa).

The active-site Nucleophile is Ser-246.

Belongs to the AB hydrolase superfamily. FUS2 hydrolase family. As to quaternary structure, homodimer.

Its pathway is secondary metabolite biosynthesis. Alpha/beta hydrolase; part of the gene cluster that mediates the biosynthesis of pseurotin A, a competitive inhibitor of chitin synthase and an inducer of nerve-cell proliferation. The PKS-NRPS hybrid synthetase psoA is responsible for the biosynthesis of azaspirene, one of the first intermediates having the 1-oxa-7-azaspiro[4,4]-non-2-ene-4,6-dione core of pseurotin, via condensation of one acetyl-CoA, 4 malonyl-CoA, and a L-phenylalanine molecule. The dual-functional monooxygenase/methyltransferase psoF seems to be involved in the addition of the C3 methyl group onto the pseurotin scaffold. Azaspirene is then converted to synerazol through 4 steps including oxidation of C17 by the cytochrome P450 monooxygenase psoD, O-methylation of the hydroxy group of C8 by the methyltransferase psoC, and the trans-to-cis isomerization of the C13 olefin by the glutathione S-transferase psoE. The fourth step of synerazol production is performed by the dual-functional monooxygenase/methyltransferase psoF which seems to catalyze the epoxidation of the intermediate deepoxy-synerazol. Synerazol can be attacked by a water molecule nonenzymatically at two different positions to yield two diol products, pseurotin A and pseurotin D. This is Alpha/beta hydrolase psoB from Aspergillus fumigatus (strain ATCC MYA-4609 / CBS 101355 / FGSC A1100 / Af293) (Neosartorya fumigata).